We begin with the raw amino-acid sequence, 1821 residues long: PH-interacting protein (1821 aa).

At Ser136 the chain carries Phosphoserine. WD repeat units lie at residues 181 to 222 (GHLS…ATLR), 224 to 262 (HAAE…PLAV), 265 to 310 (GHSA…INPR), 319 to 360 (RPGV…KISE), and 363 to 402 (FHTD…WKSI). Lys421 participates in a covalent cross-link: Glycyl lysine isopeptide (Lys-Gly) (interchain with G-Cter in SUMO2). WD repeat units follow at residues 422–461 (ITKM…LIHV), 464–504 (GHED…KVRS), and 512–551 (QGHG…KYDK). Residues Ser641, Ser659, Ser674, Ser677, Ser683, and Ser692 each carry the phosphoserine modification. 2 disordered regions span residues 653 to 695 (EQDL…SGQI) and 782 to 927 (DLGD…RLAV). Positions 665 to 681 (SNASRVNRGSVSSTSEV) are enriched in polar residues. The segment covering 800-810 (SALEETPRPLE) has biased composition (basic and acidic residues). Over residues 841–854 (SDGSSSDYSSDYSD) the composition is skewed to low complexity. Residues Ser879, Ser880, Ser881, and Ser911 each carry the phosphoserine modification. Positions 912–924 (PKKKKPKERKQKR) are enriched in basic residues. A mediates interaction with IRS1 region spans residues 924 to 1129 (RLAVGELTEN…MELIPNNAVF (206 aa)). In terms of domain architecture, Bromo 1 spans 1156-1263 (WGANPRDEEC…DLLLHFIKDQ (108 aa)). Phosphoserine occurs at positions 1281, 1283, and 1296. A disordered region spans residues 1282–1310 (DSEEEEKDADVPGTSTRKRKDHQPRRRLR). Residues 1297-1310 (TRKRKDHQPRRRLR) are compositionally biased toward basic residues. Ser1315 carries the post-translational modification Phosphoserine. One can recognise a Bromo 2 domain in the interval 1316-1421 (YDIQAWKKQC…AFFEEHISSV (106 aa)). A Phosphothreonine modification is found at Thr1359. The residue at position 1405 (Ser1405) is a Phosphoserine. Positions 1435 to 1446 (NTISKKRKKRNR) are enriched in basic residues. A disordered region spans residues 1435-1507 (NTISKKRKKR…PESSSVVRTR (73 aa)). Over residues 1447–1457 (SSSLSSSAASS) the composition is skewed to low complexity. Residue Lys1470 forms a Glycyl lysine isopeptide (Lys-Gly) (interchain with G-Cter in SUMO1); alternate linkage. A Glycyl lysine isopeptide (Lys-Gly) (interchain with G-Cter in SUMO2); alternate cross-link involves residue Lys1470. The segment covering 1471-1482 (SEVSTSPFSIPT) has biased composition (polar residues). Ser1479 bears the Phosphoserine mark. N6-acetyllysine is present on Lys1497. Phosphoserine is present on Ser1525. Position 1533 is an N6-acetyllysine (Lys1533). Positions 1556–1576 (STLSSPDPLTFSHATKNNSAK) are enriched in polar residues. Disordered regions lie at residues 1556–1596 (STLS…VFSK), 1623–1676 (QVNG…NSEQ), and 1740–1785 (RSNR…DSEE). Phosphoserine is present on Ser1560. Residue Lys1644 forms a Glycyl lysine isopeptide (Lys-Gly) (interchain with G-Cter in SUMO2) linkage. Residue Ser1651 is modified to Phosphoserine. A Glycyl lysine isopeptide (Lys-Gly) (interchain with G-Cter in SUMO2) cross-link involves residue Lys1670. Ser1762 and Ser1783 each carry phosphoserine.

As to quaternary structure, interacts (via bromo domain) with acetylated lysine residues on histone H1.4, histone H3 and H4 (in vitro). Interacts with IRS1 and IRS2. As to expression, widely expressed with most abundant expression detected in pancreatic islets, brain and skeletal muscle. Predominantly expressed in developing and regenerating neurons. Expressed in adult brain (granular layer of the olfactorium bulb, hippocampus, dentate gyrus and cerebellum internal granular layer). Expressed in the CA3 region of adult hippocampus, adult and fetal retina, perinatal dorsal root ganglion and embryonal olfactory epithelia (at protein level).

It is found in the nucleus. Its function is as follows. Probable regulator of the insulin and insulin-like growth factor signaling pathways. Stimulates cell proliferation through regulation of cyclin transcription and has an anti-apoptotic activity through AKT1 phosphorylation and activation. Plays a role in the regulation of cell morphology and cytoskeletal organization. The polypeptide is PH-interacting protein (Phip) (Mus musculus (Mouse)).